A 101-amino-acid polypeptide reads, in one-letter code: NAD(P)H-quinone oxidoreductase subunit 4L, chloroplastic (101 aa).

The next 3 helical transmembrane spans lie at 2 to 22 (MLEHVLVLSAYLLSIGIYGLI), 32 to 52 (MCLELILNAVNMNFVTFSDLF), and 61 to 81 (IFSIFVIAIAAAEAAIGLAIV).

This sequence belongs to the complex I subunit 4L family. In terms of assembly, NDH is composed of at least 16 different subunits, 5 of which are encoded in the nucleus.

The protein localises to the plastid. The protein resides in the chloroplast thylakoid membrane. The enzyme catalyses a plastoquinone + NADH + (n+1) H(+)(in) = a plastoquinol + NAD(+) + n H(+)(out). The catalysed reaction is a plastoquinone + NADPH + (n+1) H(+)(in) = a plastoquinol + NADP(+) + n H(+)(out). In terms of biological role, NDH shuttles electrons from NAD(P)H:plastoquinone, via FMN and iron-sulfur (Fe-S) centers, to quinones in the photosynthetic chain and possibly in a chloroplast respiratory chain. The immediate electron acceptor for the enzyme in this species is believed to be plastoquinone. Couples the redox reaction to proton translocation, and thus conserves the redox energy in a proton gradient. The polypeptide is NAD(P)H-quinone oxidoreductase subunit 4L, chloroplastic (Nandina domestica (Heavenly bamboo)).